The following is a 264-amino-acid chain: Putative hydroxypyruvate isomerase (264 aa).

Residues Glu145 and Glu243 each act as proton donor/acceptor in the active site.

The protein belongs to the hyi family.

It carries out the reaction 3-hydroxypyruvate = 2-hydroxy-3-oxopropanoate. Its function is as follows. Catalyzes the reversible isomerization between hydroxypyruvate and 2-hydroxy-3-oxopropanoate (also termed tartronate semialdehyde). In Drosophila melanogaster (Fruit fly), this protein is Putative hydroxypyruvate isomerase (Gip).